Consider the following 474-residue polypeptide: Cysteine--tRNA ligase (474 aa).

Cys27 provides a ligand contact to Zn(2+). Residues 29–39 (ITPYDHMHVGH) carry the 'HIGH' region motif. Residues Cys213, His238, and Glu242 each contribute to the Zn(2+) site. Positions 271–275 (KMSKS) match the 'KMSKS' region motif. An ATP-binding site is contributed by Lys274.

This sequence belongs to the class-I aminoacyl-tRNA synthetase family. Zn(2+) serves as cofactor.

It is found in the cytoplasm. The enzyme catalyses tRNA(Cys) + L-cysteine + ATP = L-cysteinyl-tRNA(Cys) + AMP + diphosphate. This chain is Cysteine--tRNA ligase, found in Pyrobaculum neutrophilum (strain DSM 2338 / JCM 9278 / NBRC 100436 / V24Sta) (Thermoproteus neutrophilus).